Consider the following 88-residue polypeptide: Kunitz-type U15-theraphotoxin-Hs1a (88 aa).

The first 27 residues, Met1–Ala27, serve as a signal peptide directing secretion. Positions Glu28 to Arg33 are excised as a propeptide. One can recognise a BPTI/Kunitz inhibitor domain in the interval Cys37 to Cys85. 2 cysteine pairs are disulfide-bonded: Cys37–Cys85 and Cys60–Cys81.

The protein belongs to the venom Kunitz-type family. 03 (sub-Kunitz) subfamily. Expressed by the venom gland.

It is found in the secreted. In terms of biological role, serine protease inhibitor that inhibits trypsin at a molar ratio of 1:1. The sequence is that of Kunitz-type U15-theraphotoxin-Hs1a from Cyriopagopus schmidti (Chinese bird spider).